Consider the following 339-residue polypeptide: Nicotinate-nucleotide--dimethylbenzimidazole phosphoribosyltransferase (339 aa).

Glu-306 (proton acceptor) is an active-site residue.

It belongs to the CobT family.

It catalyses the reaction 5,6-dimethylbenzimidazole + nicotinate beta-D-ribonucleotide = alpha-ribazole 5'-phosphate + nicotinate + H(+). It functions in the pathway nucleoside biosynthesis; alpha-ribazole biosynthesis; alpha-ribazole from 5,6-dimethylbenzimidazole: step 1/2. In terms of biological role, catalyzes the synthesis of alpha-ribazole-5'-phosphate from nicotinate mononucleotide (NAMN) and 5,6-dimethylbenzimidazole (DMB). The polypeptide is Nicotinate-nucleotide--dimethylbenzimidazole phosphoribosyltransferase (Brucella abortus (strain S19)).